The chain runs to 125 residues: Large ribosomal subunit protein bL12 (125 aa).

This sequence belongs to the bacterial ribosomal protein bL12 family. In terms of assembly, homodimer. Part of the ribosomal stalk of the 50S ribosomal subunit. Forms a multimeric L10(L12)X complex, where L10 forms an elongated spine to which 2 to 4 L12 dimers bind in a sequential fashion. Binds GTP-bound translation factors.

Its function is as follows. Forms part of the ribosomal stalk which helps the ribosome interact with GTP-bound translation factors. Is thus essential for accurate translation. The protein is Large ribosomal subunit protein bL12 of Erythrobacter litoralis (strain HTCC2594).